Consider the following 95-residue polypeptide: MHALIDLVKYPLITDKATRLLELNQYTFLTSRVATKTDIKNAIEFLFNVKVISINTCLLPLKRKRLGKFVGSKPRYKKAVVTLEKNNTINLFSEN.

Belongs to the universal ribosomal protein uL23 family. As to quaternary structure, part of the 50S ribosomal subunit.

The protein localises to the plastid. The protein resides in the chloroplast. In terms of biological role, binds to 23S rRNA. This Guillardia theta (Cryptophyte) protein is Large ribosomal subunit protein uL23c (rpl23).